Here is a 610-residue protein sequence, read N- to C-terminus: Zinc metalloproteinase-disintegrin-like acurhagin (610 aa).

Positions 1 to 20 (MIQVLLVTICLAAFPYQGSS) are cleaved as a signal peptide. The propeptide occupies 21-191 (IILESGDVND…ISQLNLIPEQ (171 aa)). Q192 is subject to Pyrrolidone carboxylic acid. One can recognise a Peptidase M12B domain in the interval 198–394 (KYVETVVVVD…HNPECIDNEP (197 aa)). Residues E201 and D285 each contribute to the Ca(2+) site. 3 disulfides stabilise this stretch: C309-C389, C349-C373, and C351-C356. H334 contributes to the Zn(2+) binding site. Residue E335 is part of the active site. Residues H338 and H344 each coordinate Zn(2+). N372 carries an N-linked (GlcNAc...) asparagine glycan. The Ca(2+) site is built by C389, N392, N407, L409, E411, E414, and D417. Positions 402 to 488 (PPLCGNELLE…ECPADVFHKN (87 aa)) constitute a Disintegrin domain. 14 disulfide bridges follow: C405–C434, C416–C429, C418–C424, C428–C451, C442–C448, C447–C473, C460–C480, C467–C499, C492–C504, C511–C561, C526–C572, C539–C549, C556–C598, and C592–C603. The D/ECD-tripeptide motif lies at 466-468 (ECD). Ca(2+) contacts are provided by D468, P469, E471, D483, and V484.

Belongs to the venom metalloproteinase (M12B) family. P-III subfamily. P-IIIa sub-subfamily. In terms of assembly, monomer. Zn(2+) is required as a cofactor. In terms of processing, N-glycosylated. As to expression, expressed by the venom gland.

It is found in the secreted. The proteinase activity is slightly enhanced by Ca(2+) and Mg(2+), but is completely inhibited by Zn(2+). Is completely inhibited by phenanthroline and EDTA. Not inhibited by PMSF. Its function is as follows. Snake venom zinc metalloprotease that causes hemorrhage and dose-dependently inhibits platelet aggregation triggered by collagen. This inhibition is due to its binding to glycoprotein VI (GP6) and collagen. The binding to GP6 results in inhibition of the signaling pathway (decrease of tyrosine phosphorylation of signaling proteins such as Syk, LAT, PI3-K and PLCgamma2). Preferentially cleaves alpha chain (FGA) of fibrinogen, followed by beta chain (FGB). Also degrades the extracellular matrix protein fibronectin (FN1), and cleaves collagen and von Willebrand factor (VWF). The chain is Zinc metalloproteinase-disintegrin-like acurhagin from Deinagkistrodon acutus (Hundred-pace snake).